A 458-amino-acid polypeptide reads, in one-letter code: Tyrosine phenol-lyase (458 aa).

Lys258 is subject to N6-(pyridoxal phosphate)lysine.

It belongs to the beta-eliminating lyase family. As to quaternary structure, homotetramer. The cofactor is pyridoxal 5'-phosphate.

It carries out the reaction L-tyrosine + H2O = phenol + pyruvate + NH4(+). In Pasteurella multocida (strain Pm70), this protein is Tyrosine phenol-lyase (tpl).